Here is a 201-residue protein sequence, read N- to C-terminus: Small ribosomal subunit protein uS4 (201 aa).

The S4 RNA-binding domain maps to 91-151 (SRLDNVVYRA…EKSRKMVWFD (61 aa)).

The protein belongs to the universal ribosomal protein uS4 family. Part of the 30S ribosomal subunit. Contacts protein S5. The interaction surface between S4 and S5 is involved in control of translational fidelity.

One of the primary rRNA binding proteins, it binds directly to 16S rRNA where it nucleates assembly of the body of the 30S subunit. Its function is as follows. With S5 and S12 plays an important role in translational accuracy. This chain is Small ribosomal subunit protein uS4, found in Corynebacterium kroppenstedtii (strain DSM 44385 / JCM 11950 / CIP 105744 / CCUG 35717).